Consider the following 396-residue polypeptide: Major outer membrane porin, serovar A (396 aa).

Positions 1-22 (MKKLLKSVLVFAALSSASSLQA) are cleaved as a signal peptide.

The protein belongs to the chlamydial porin (CP) (TC 1.B.2) family. In terms of assembly, part of a disulfide cross-linked outer membrane complex (COMC) composed of the major outer membrane porin (MOMP), the small cysteine-rich protein (OmcA) and the large cysteine-rich periplasmic protein (OmcB).

The protein resides in the cell outer membrane. Its function is as follows. In elementary bodies (EBs, the infectious stage, which is able to survive outside the host cell) provides the structural integrity of the outer envelope through disulfide cross-links with the small cysteine-rich protein and the large cysteine-rich periplasmic protein. It has been described in publications as the Sarkosyl-insoluble COMC (Chlamydia outer membrane complex), and serves as the functional equivalent of peptidoglycan. Permits diffusion of specific solutes through the outer membrane. The sequence is that of Major outer membrane porin, serovar A (ompA) from Chlamydia trachomatis.